Consider the following 292-residue polypeptide: AKT-interacting protein (292 aa).

Over residues 1–11 (MNPLWSMSSGS) the composition is skewed to polar residues. Positions 1-64 (MNPLWSMSSG…SPAPAAQSTN (64 aa)) are disordered. The segment covering 14–23 (KRAEGEEKTL) has biased composition (basic and acidic residues). S30 bears the Phosphoserine mark. The UBC core domain maps to 74-222 (YLEYSLLAEF…VVDSVKVCTA (149 aa)).

Belongs to the ubiquitin-conjugating enzyme family. FTS subfamily. In terms of assembly, component of the FTS/Hook/FHIP complex (FHF complex), composed of AKTIP/FTS, FHIP1B, and one or more members of the Hook family of proteins HOOK1, HOOK2, and HOOK3. Interacts directly with HOOK1, HOOK2 and HOOK3. The FHF complex associates with the homotypic vesicular sorting complex (the HOPS complex). Also interacts with AKT1. May interact with FHIP1A.

It is found in the cytoplasm. The protein resides in the cell membrane. In terms of biological role, component of the FTS/Hook/FHIP complex (FHF complex). The FHF complex may function to promote vesicle trafficking and/or fusion via the homotypic vesicular protein sorting complex (the HOPS complex). Regulates apoptosis by enhancing phosphorylation and activation of AKT1. Increases release of TNFSF6 via the AKT1/GSK3B/NFATC1 signaling cascade. FHF complex promotes the distribution of AP-4 complex to the perinuclear area of the cell. The protein is AKT-interacting protein (Aktip) of Rattus norvegicus (Rat).